A 150-amino-acid polypeptide reads, in one-letter code: Small ribosomal subunit protein eS19 (150 aa).

The protein belongs to the eukaryotic ribosomal protein eS19 family. Part of the 30S ribosomal subunit.

In terms of biological role, may be involved in maturation of the 30S ribosomal subunit. The chain is Small ribosomal subunit protein eS19 from Thermoplasma acidophilum (strain ATCC 25905 / DSM 1728 / JCM 9062 / NBRC 15155 / AMRC-C165).